Consider the following 161-residue polypeptide: Large ribosomal subunit protein uL10 (161 aa).

The protein belongs to the universal ribosomal protein uL10 family. Part of the ribosomal stalk of the 50S ribosomal subunit. The N-terminus interacts with L11 and the large rRNA to form the base of the stalk. The C-terminus forms an elongated spine to which L12 dimers bind in a sequential fashion forming a multimeric L10(L12)X complex.

In terms of biological role, forms part of the ribosomal stalk, playing a central role in the interaction of the ribosome with GTP-bound translation factors. This Buchnera aphidicola subsp. Cinara cedri (strain Cc) protein is Large ribosomal subunit protein uL10.